We begin with the raw amino-acid sequence, 407 residues long: MTAVIHPDIRPRINSVASDDLNAAERERIRAKSALFAPPEARLADGRRDLVGLSREELAALMTEIGEKPFRAKQLWHWIYHQGATDFSAMTTIAKPMQAKLAEHFVVSRPTTATEQTSVDETRKFLFRFRDGQEAETVYIPDRREDRGAVCISSQVGCTLSCTFCHTGTQKLVRNLGPAEIVGQFMAARDSYGEWPSPSADMPRYLSTIVLMGMGEPLYNYENVAKAMRIIMDGEGIALSRRRITLSTSGVVPMMDRCGDELGINLAISLHAVTNELRDQIVPLNRKYPIEELIAACRRYPAASNSRRITFEYIMLRGVNDSEADARELVRLIRDLPAKVNLIPFNPWPGSDFQPSTRQQLTKFANIVMDAGFASPIRTPRGQDILAACGQLKTESERQRRSATPEA.

The Proton acceptor role is filled by E136. In terms of domain architecture, Radical SAM core spans 144-378 (REDRGAVCIS…MDAGFASPIR (235 aa)). C151 and C389 are joined by a disulfide. Residues C158, C162, and C165 each coordinate [4Fe-4S] cluster. S-adenosyl-L-methionine contacts are provided by residues 215-216 (GE), S247, 269-271 (SLH), and N346. C389 acts as the S-methylcysteine intermediate in catalysis.

This sequence belongs to the radical SAM superfamily. RlmN family. The cofactor is [4Fe-4S] cluster.

It is found in the cytoplasm. It catalyses the reaction adenosine(2503) in 23S rRNA + 2 reduced [2Fe-2S]-[ferredoxin] + 2 S-adenosyl-L-methionine = 2-methyladenosine(2503) in 23S rRNA + 5'-deoxyadenosine + L-methionine + 2 oxidized [2Fe-2S]-[ferredoxin] + S-adenosyl-L-homocysteine. The catalysed reaction is adenosine(37) in tRNA + 2 reduced [2Fe-2S]-[ferredoxin] + 2 S-adenosyl-L-methionine = 2-methyladenosine(37) in tRNA + 5'-deoxyadenosine + L-methionine + 2 oxidized [2Fe-2S]-[ferredoxin] + S-adenosyl-L-homocysteine. Functionally, specifically methylates position 2 of adenine 2503 in 23S rRNA and position 2 of adenine 37 in tRNAs. m2A2503 modification seems to play a crucial role in the proofreading step occurring at the peptidyl transferase center and thus would serve to optimize ribosomal fidelity. This chain is Dual-specificity RNA methyltransferase RlmN, found in Gluconobacter oxydans (strain 621H) (Gluconobacter suboxydans).